The primary structure comprises 1247 residues: E3 ubiquitin-protein ligase hecw-1 (1247 aa).

A WW 1 domain is found at 602 to 635 (TPPESHWKTYLDAKKRKFYVNHVTKETRWTKPDT). The interval 633-659 (PDTLNNNHIEPETPVHKRLSDRSASPR) is disordered. The span at 641-653 (IEPETPVHKRLSD) shows a compositional bias: basic and acidic residues. A WW 2 domain is found at 745 to 777 (QPLPSGWECITMNNRTVFLNHANKETSFYDPRI). One can recognise an HECT domain in the interval 914–1247 (DPFVLKKSRL…IVNGMSYSIE (334 aa)). C1215 acts as the Glycyl thioester intermediate in catalysis.

Expressed in the nervous system throughout the body. In the anterior ganglion, expression is limited to the two lateral outer labial neurons OLLL and OLLR.

It is found in the cytoplasm. The catalysed reaction is S-ubiquitinyl-[E2 ubiquitin-conjugating enzyme]-L-cysteine + [acceptor protein]-L-lysine = [E2 ubiquitin-conjugating enzyme]-L-cysteine + N(6)-ubiquitinyl-[acceptor protein]-L-lysine.. The protein operates within protein modification; protein ubiquitination. E3 ubiquitin-protein ligase. Functions in the OLL neurons in the anterior ganglion to inhibit avoidance to microbial pathogens such as P.aeruginosa although worms do display avoidance behavior, vacating a P.aeruginosa lawn within 24 hours. Likely to act by inhibiting the neuropeptide receptor npr-1. The protein is E3 ubiquitin-protein ligase hecw-1 of Caenorhabditis elegans.